A 127-amino-acid polypeptide reads, in one-letter code: Small ribosomal subunit protein uS12 (127 aa).

At Asp-89 the chain carries 3-methylthioaspartic acid.

This sequence belongs to the universal ribosomal protein uS12 family. Part of the 30S ribosomal subunit. Contacts proteins S8 and S17. May interact with IF1 in the 30S initiation complex.

With S4 and S5 plays an important role in translational accuracy. Functionally, interacts with and stabilizes bases of the 16S rRNA that are involved in tRNA selection in the A site and with the mRNA backbone. Located at the interface of the 30S and 50S subunits, it traverses the body of the 30S subunit contacting proteins on the other side and probably holding the rRNA structure together. The combined cluster of proteins S8, S12 and S17 appears to hold together the shoulder and platform of the 30S subunit. The polypeptide is Small ribosomal subunit protein uS12 (Akkermansia muciniphila (strain ATCC BAA-835 / DSM 22959 / JCM 33894 / BCRC 81048 / CCUG 64013 / CIP 107961 / Muc)).